The sequence spans 381 residues: Succinyl-diaminopimelate desuccinylase (381 aa).

Residue His69 coordinates Zn(2+). Residue Asp71 is part of the active site. Asp103 is a binding site for Zn(2+). The active-site Proton acceptor is Glu137. Zn(2+)-binding residues include Glu138, Glu166, and His355.

This sequence belongs to the peptidase M20A family. DapE subfamily. In terms of assembly, homodimer. It depends on Zn(2+) as a cofactor. Requires Co(2+) as cofactor.

The enzyme catalyses N-succinyl-(2S,6S)-2,6-diaminopimelate + H2O = (2S,6S)-2,6-diaminopimelate + succinate. Its pathway is amino-acid biosynthesis; L-lysine biosynthesis via DAP pathway; LL-2,6-diaminopimelate from (S)-tetrahydrodipicolinate (succinylase route): step 3/3. Functionally, catalyzes the hydrolysis of N-succinyl-L,L-diaminopimelic acid (SDAP), forming succinate and LL-2,6-diaminopimelate (DAP), an intermediate involved in the bacterial biosynthesis of lysine and meso-diaminopimelic acid, an essential component of bacterial cell walls. This Rickettsia rickettsii (strain Iowa) protein is Succinyl-diaminopimelate desuccinylase.